We begin with the raw amino-acid sequence, 205 residues long: Small ribosomal subunit protein uS4 (205 aa).

A disordered region spans residues 25-48; the sequence is KTIEARPTPPGQHGAKNTRRKKSD. An S4 RNA-binding domain is found at 94-157; it reads RRLDNVVFRA…TKLPIVVETL (64 aa).

It belongs to the universal ribosomal protein uS4 family. In terms of assembly, part of the 30S ribosomal subunit. Contacts protein S5. The interaction surface between S4 and S5 is involved in control of translational fidelity.

Functionally, one of the primary rRNA binding proteins, it binds directly to 16S rRNA where it nucleates assembly of the body of the 30S subunit. In terms of biological role, with S5 and S12 plays an important role in translational accuracy. In Methylobacillus flagellatus (strain ATCC 51484 / DSM 6875 / VKM B-1610 / KT), this protein is Small ribosomal subunit protein uS4.